The primary structure comprises 712 residues: Protein SDA1 homolog (712 aa).

At Thr234 the chain carries Phosphothreonine. A Phosphoserine modification is found at Ser236. Disordered regions lie at residues 488–573 and 662–712; these read TIDI…DMRI and VNEH…KKMK. Acidic residues-rich tracts occupy residues 491 to 501 and 516 to 559; these read IESEDDTDSND and GADD…ESGE. The segment covering 560 to 572 has biased composition (basic and acidic residues); it reads ESAKAKKEKKDMR. 2 stretches are compositionally biased toward basic residues: residues 671–692 and 700–712; these read REKR…KVKK and ALRK…KKMK.

This sequence belongs to the SDA1 family.

The protein localises to the nucleus. Its subcellular location is the nucleolus. In terms of biological role, required for 60S pre-ribosomal subunits export to the cytoplasm. The sequence is that of Protein SDA1 homolog (Mys45A) from Drosophila melanogaster (Fruit fly).